A 273-amino-acid polypeptide reads, in one-letter code: Hydroxyethylthiazole kinase (273 aa).

Substrate is bound at residue Met49. ATP contacts are provided by Lys125 and Thr171. Gly198 is a substrate binding site.

This sequence belongs to the Thz kinase family. Mg(2+) serves as cofactor.

The catalysed reaction is 5-(2-hydroxyethyl)-4-methylthiazole + ATP = 4-methyl-5-(2-phosphooxyethyl)-thiazole + ADP + H(+). It functions in the pathway cofactor biosynthesis; thiamine diphosphate biosynthesis; 4-methyl-5-(2-phosphoethyl)-thiazole from 5-(2-hydroxyethyl)-4-methylthiazole: step 1/1. In terms of biological role, catalyzes the phosphorylation of the hydroxyl group of 4-methyl-5-beta-hydroxyethylthiazole (THZ). This chain is Hydroxyethylthiazole kinase, found in Natranaerobius thermophilus (strain ATCC BAA-1301 / DSM 18059 / JW/NM-WN-LF).